Consider the following 347-residue polypeptide: Haptoglobin (347 aa).

The N-terminal stretch at 1-18 (MSALGAVIALLLWGQLFA) is a signal peptide. The 58-residue stretch at 31-88 (DGCPKPPEIANGYVEHLVRYQCKKYYRLRTEGDGVYTLNNEKQWTNKAVGDKLPECEA) folds into the Sushi domain. Disulfide bonds link cysteine 52/cysteine 86, cysteine 90/cysteine 207, cysteine 250/cysteine 281, and cysteine 292/cysteine 322. A Peptidase S1 domain is found at 103–345 (ILGGHLDAKG…IQDWVQKTIA (243 aa)). Residues asparagine 125, asparagine 148, asparagine 152, and asparagine 182 are each glycosylated (N-linked (GlcNAc...) asparagine). An interaction with CD163 region spans residues 259-264 (VPEKKT).

It belongs to the peptidase S1 family. Tetramer of two alpha and two beta chains; disulfide-linked. The hemoglobin/haptoglobin complex is composed of a haptoglobin dimer bound to two hemoglobin alpha-beta dimers. Interacts with CD163. Interacts with ERGIC3. As to expression, expressed by the liver and secreted in plasma.

The protein resides in the secreted. As a result of hemolysis, hemoglobin is found to accumulate in the kidney and is secreted in the urine. Haptoglobin captures, and combines with free plasma hemoglobin to allow hepatic recycling of heme iron and to prevent kidney damage. Haptoglobin also acts as an antioxidant, has antibacterial activity and plays a role in modulating many aspects of the acute phase response. Hemoglobin/haptoglobin complexes are rapidly cleared by the macrophage CD163 scavenger receptor expressed on the surface of liver Kupfer cells through an endocytic lysosomal degradation pathway. This chain is Haptoglobin (HP), found in Ateles geoffroyi (Black-handed spider monkey).